A 486-amino-acid polypeptide reads, in one-letter code: MSQPPPEPGPVRRRTVRRRAIVPGQGRGPGRWSQRLPRGARGADRDGFAAFLRAETTGGLLLLAATVAALVWANTAPGTYHTVWSTPAGLGPSWLHLADMHLTDWVADALLAVFFFTVGLELKRELTLGTLADRRSAALPVAAAAGGMLAPALLCLALTHHTPGAGHAWAIPVATDIAFALGVLSLAGPRVPPGLRTVLLGLAVADDLGGILLIALGLNHGINPAWLATATTLLATTALAHHRRWTSPLLHLPLAAAVWISLHAAGIHPTVAGVALGLLVRVHPDPDEPEAPATRLERHLGPINAAVILPAFALSATGVSLTPHALLHVATDPISRGVAVGLLAGKLLGVPAGAWLAVRLHLARLPDGVRWRHLVPLGLLAGIGYTVSLLITRLALPDPTAVDGASTAILTASVAASALALTALRSPLATVGAPATRGSSRPATQVGGVAGPIPQTRRESDGGPTGGQEPPPARVRRAPPASPHPR.

11 helical membrane passes run Gly58 to Gly78, Leu102 to Leu122, Ala138 to Leu158, Ala168 to Gly188, Val198 to Leu218, His220 to Ala240, Ile260 to Val280, Leu300 to Ser320, Val338 to Val358, Leu374 to Leu394, and Gly404 to Leu424. The tract at residues Gly432–Arg486 is disordered.

This sequence belongs to the NhaA Na(+)/H(+) (TC 2.A.33) antiporter family.

Its subcellular location is the cell membrane. It carries out the reaction Na(+)(in) + 2 H(+)(out) = Na(+)(out) + 2 H(+)(in). Functionally, na(+)/H(+) antiporter that extrudes sodium in exchange for external protons. This chain is Na(+)/H(+) antiporter NhaA 2, found in Frankia alni (strain DSM 45986 / CECT 9034 / ACN14a).